We begin with the raw amino-acid sequence, 79 residues long: Conotoxin 12 (79 aa).

The signal sequence occupies residues 1 to 22 (MKLTCVLIITVLFLTASQLITA). The propeptide occupies 23–47 (DYSRDQRQYRAVRLGDEMRNFKGAR). Cystine bridges form between Cys-49-Cys-62, Cys-56-Cys-67, and Cys-61-Cys-77.

This sequence belongs to the conotoxin O1 superfamily. Expressed by the venom duct.

Its subcellular location is the secreted. In Conus vexillum (Flag cone), this protein is Conotoxin 12.